The chain runs to 268 residues: Tryptophan synthase alpha chain (268 aa).

Residues Glu-49 and Asp-60 each act as proton acceptor in the active site.

Belongs to the TrpA family. As to quaternary structure, tetramer of two alpha and two beta chains.

The catalysed reaction is (1S,2R)-1-C-(indol-3-yl)glycerol 3-phosphate + L-serine = D-glyceraldehyde 3-phosphate + L-tryptophan + H2O. It functions in the pathway amino-acid biosynthesis; L-tryptophan biosynthesis; L-tryptophan from chorismate: step 5/5. In terms of biological role, the alpha subunit is responsible for the aldol cleavage of indoleglycerol phosphate to indole and glyceraldehyde 3-phosphate. In Escherichia fergusonii (strain ATCC 35469 / DSM 13698 / CCUG 18766 / IAM 14443 / JCM 21226 / LMG 7866 / NBRC 102419 / NCTC 12128 / CDC 0568-73), this protein is Tryptophan synthase alpha chain.